Here is a 433-residue protein sequence, read N- to C-terminus: Enolase (433 aa).

Gln167 lines the (2R)-2-phosphoglycerate pocket. The Proton donor role is filled by Glu209. 3 residues coordinate Mg(2+): Asp246, Glu291, and Asp318. Lys343, Arg372, Ser373, and Lys394 together coordinate (2R)-2-phosphoglycerate. Catalysis depends on Lys343, which acts as the Proton acceptor.

It belongs to the enolase family. Component of the RNA degradosome, a multiprotein complex involved in RNA processing and mRNA degradation. It depends on Mg(2+) as a cofactor.

It is found in the cytoplasm. Its subcellular location is the secreted. It localises to the cell surface. The enzyme catalyses (2R)-2-phosphoglycerate = phosphoenolpyruvate + H2O. The protein operates within carbohydrate degradation; glycolysis; pyruvate from D-glyceraldehyde 3-phosphate: step 4/5. In terms of biological role, catalyzes the reversible conversion of 2-phosphoglycerate (2-PG) into phosphoenolpyruvate (PEP). It is essential for the degradation of carbohydrates via glycolysis. The polypeptide is Enolase (Shewanella piezotolerans (strain WP3 / JCM 13877)).